Consider the following 126-residue polypeptide: Small ribosomal subunit protein uS12 (126 aa).

A disordered region spans residues 1–28 (MPTINQLVRKGRQSETTKSKSPALQDCP). D89 carries the 3-methylthioaspartic acid modification. A disordered region spans residues 103 to 126 (DTQGVKDRKQARSKYGAKRAKAGK). Residues 113–126 (ARSKYGAKRAKAGK) are compositionally biased toward basic residues.

The protein belongs to the universal ribosomal protein uS12 family. As to quaternary structure, part of the 30S ribosomal subunit. Contacts proteins S8 and S17. May interact with IF1 in the 30S initiation complex.

Its function is as follows. With S4 and S5 plays an important role in translational accuracy. In terms of biological role, interacts with and stabilizes bases of the 16S rRNA that are involved in tRNA selection in the A site and with the mRNA backbone. Located at the interface of the 30S and 50S subunits, it traverses the body of the 30S subunit contacting proteins on the other side and probably holding the rRNA structure together. The combined cluster of proteins S8, S12 and S17 appears to hold together the shoulder and platform of the 30S subunit. In Paraburkholderia phytofirmans (strain DSM 17436 / LMG 22146 / PsJN) (Burkholderia phytofirmans), this protein is Small ribosomal subunit protein uS12.